The chain runs to 191 residues: MAAPRGRAAPWTTALLLLLASQVLSPGSCADEEEVPEEWVLLHVVQGQIGAGNYSYLRLNHEGKIVLRMRSLKGDADLYVSASSLHPSFDDYELQSATCGPDAVSIPAHFRRPVGIGVYGHPSHLESEFEMKVYYDGTVEQHPFGEAAYPADGADAGQKHAGAPEDASQEEESVLWTILISILKLVLEILF.

Residues 1 to 30 form the signal peptide; the sequence is MAAPRGRAAPWTTALLLLLASQVLSPGSCA. Asparagine 53 is a glycosylation site (N-linked (GlcNAc...) asparagine).

Belongs to the UPF0669 family. Mainly expressed in hepatocytes and some weak expression in germinal center cells of lymph nodes.

The protein localises to the secreted. Functionally, may be involved in induction of apoptosis in CD4(+) T-cells, but not CD8(+) T-cells or hepatocytes. The sequence is that of UPF0669 protein C6orf120 (C6orf120) from Homo sapiens (Human).